Reading from the N-terminus, the 329-residue chain is Capsular polysaccharide phosphotransferase WcwK (329 aa).

It belongs to the stealth family.

In Streptococcus pneumoniae, this protein is Capsular polysaccharide phosphotransferase WcwK (wcwK).